A 502-amino-acid chain; its full sequence is MFS-type transporeter aprT (502 aa).

Residues 1–38 are disordered; that stretch reads MASPELASHHSDPSDGEGAPFLPGVDDESPESLNSDIP. 11 helical membrane passes run 45–65, 114–136, 150–170, 175–195, 214–234, 239–259, 302–322, 336–356, 380–400, 403–423, and 464–484; these read HGLIIKLFVIYLAIGMGGPMI, IGYREFFNAFLTSTFALPYGLLA, VGFVFNSVLSFAPIWLPNIFP, WFGAVGWVLGGGPVLLFALFW, FGIATVSAGFLANVTSSFVMK, VPLMTGCGLLFAGLLVANLLP, VAVILPAFFVTQLAGGSAFLV, ATLLVALQHAFTIPVLFFILP, VMLLALGLFGIGLSSSINTLI, LLLHAGGAGFVLIARGLITGL, and LWIGLPWLIVSFLLALIALVL. N-linked (GlcNAc...) asparagine glycosylation is present at asparagine 495.

Belongs to the major facilitator superfamily.

The protein localises to the cell membrane. MFS-rype transporer; part of the gene cluster that mediates the biosynthesis of the asperipin-2a, a bicyclic peptide that possesses two macrocyclic ether rings consisting of 14- and 17-membered paracyclophans. AprT is likely to be involved in the cellular export of asperipin-2a. The sequence is that of MFS-type transporeter aprT from Aspergillus flavus (strain ATCC 200026 / FGSC A1120 / IAM 13836 / NRRL 3357 / JCM 12722 / SRRC 167).